The primary structure comprises 839 residues: DNA gyrase subunit A (839 aa).

The 465-residue stretch at 46–510 (LPDARDGLKP…ISEDIDDEDL (465 aa)) folds into the Topo IIA-type catalytic domain. The O-(5'-phospho-DNA)-tyrosine intermediate role is filled by Tyr-134. The GyrA-box motif lies at 537–543 (QHRGGVG).

It belongs to the type II topoisomerase GyrA/ParC subunit family. In terms of assembly, heterotetramer, composed of two GyrA and two GyrB chains. In the heterotetramer, GyrA contains the active site tyrosine that forms a transient covalent intermediate with DNA, while GyrB binds cofactors and catalyzes ATP hydrolysis.

The protein localises to the cytoplasm. It catalyses the reaction ATP-dependent breakage, passage and rejoining of double-stranded DNA.. A type II topoisomerase that negatively supercoils closed circular double-stranded (ds) DNA in an ATP-dependent manner to modulate DNA topology and maintain chromosomes in an underwound state. Negative supercoiling favors strand separation, and DNA replication, transcription, recombination and repair, all of which involve strand separation. Also able to catalyze the interconversion of other topological isomers of dsDNA rings, including catenanes and knotted rings. Type II topoisomerases break and join 2 DNA strands simultaneously in an ATP-dependent manner. The chain is DNA gyrase subunit A from Mycoplasma pneumoniae (strain ATCC 29342 / M129 / Subtype 1) (Mycoplasmoides pneumoniae).